The sequence spans 214 residues: Probable transaldolase 1 (214 aa).

Residue Lys-83 is the Schiff-base intermediate with substrate of the active site.

It belongs to the transaldolase family. Type 3B subfamily.

It localises to the cytoplasm. It catalyses the reaction D-sedoheptulose 7-phosphate + D-glyceraldehyde 3-phosphate = D-erythrose 4-phosphate + beta-D-fructose 6-phosphate. It functions in the pathway carbohydrate degradation; pentose phosphate pathway; D-glyceraldehyde 3-phosphate and beta-D-fructose 6-phosphate from D-ribose 5-phosphate and D-xylulose 5-phosphate (non-oxidative stage): step 2/3. Transaldolase is important for the balance of metabolites in the pentose-phosphate pathway. This Listeria monocytogenes serotype 4b (strain F2365) protein is Probable transaldolase 1.